A 655-amino-acid chain; its full sequence is 1-deoxy-D-xylulose-5-phosphate synthase (655 aa).

Residues His73 and 114 to 116 (SHA) each bind thiamine diphosphate. Asp145 contacts Mg(2+). Thiamine diphosphate is bound by residues 146–147 (GA), Asn174, Tyr285, and Glu367. Asn174 lines the Mg(2+) pocket. Positions 626 to 655 (RQPAIEDDPTSPGEAAPAGERAGEAIGDQR) are disordered. Residues 646-655 (RAGEAIGDQR) show a composition bias toward basic and acidic residues.

Belongs to the transketolase family. DXPS subfamily. Homodimer. Mg(2+) serves as cofactor. Thiamine diphosphate is required as a cofactor.

The catalysed reaction is D-glyceraldehyde 3-phosphate + pyruvate + H(+) = 1-deoxy-D-xylulose 5-phosphate + CO2. The protein operates within metabolic intermediate biosynthesis; 1-deoxy-D-xylulose 5-phosphate biosynthesis; 1-deoxy-D-xylulose 5-phosphate from D-glyceraldehyde 3-phosphate and pyruvate: step 1/1. In terms of biological role, catalyzes the acyloin condensation reaction between C atoms 2 and 3 of pyruvate and glyceraldehyde 3-phosphate to yield 1-deoxy-D-xylulose-5-phosphate (DXP). This chain is 1-deoxy-D-xylulose-5-phosphate synthase, found in Frankia casuarinae (strain DSM 45818 / CECT 9043 / HFP020203 / CcI3).